Reading from the N-terminus, the 486-residue chain is Membrane-bound lytic murein transglycosylase F (486 aa).

An N-terminal signal peptide occupies residues 1–21 (MTRIKLNYFVIGVVALLLALA). The interval 22 to 268 (LWPNIPWRNG…RLEEKYLGHV (247 aa)) is non-LT domain. Residues 269 to 486 (GSFDYVDTKT…VVGPGWSINN (218 aa)) are LT domain. Glu-313 is an active-site residue.

This sequence in the N-terminal section; belongs to the bacterial solute-binding protein 3 family. The protein in the C-terminal section; belongs to the transglycosylase Slt family.

The protein localises to the cell outer membrane. It carries out the reaction Exolytic cleavage of the (1-&gt;4)-beta-glycosidic linkage between N-acetylmuramic acid (MurNAc) and N-acetylglucosamine (GlcNAc) residues in peptidoglycan, from either the reducing or the non-reducing ends of the peptidoglycan chains, with concomitant formation of a 1,6-anhydrobond in the MurNAc residue.. Murein-degrading enzyme that degrades murein glycan strands and insoluble, high-molecular weight murein sacculi, with the concomitant formation of a 1,6-anhydromuramoyl product. Lytic transglycosylases (LTs) play an integral role in the metabolism of the peptidoglycan (PG) sacculus. Their lytic action creates space within the PG sacculus to allow for its expansion as well as for the insertion of various structures such as secretion systems and flagella. This chain is Membrane-bound lytic murein transglycosylase F, found in Yersinia enterocolitica serotype O:8 / biotype 1B (strain NCTC 13174 / 8081).